Consider the following 364-residue polypeptide: DNA replication and repair protein RecF (364 aa).

30–37 provides a ligand contact to ATP; the sequence is GDNGAGKT.

This sequence belongs to the RecF family.

It localises to the cytoplasm. Its function is as follows. The RecF protein is involved in DNA metabolism; it is required for DNA replication and normal SOS inducibility. RecF binds preferentially to single-stranded, linear DNA. It also seems to bind ATP. This is DNA replication and repair protein RecF from Stenotrophomonas maltophilia (strain K279a).